The sequence spans 540 residues: Cytosolic carboxypeptidase 6 (540 aa).

Residues 167-438 (YPYTYTRFQH…NVARTFLDYY (272 aa)) enclose the Peptidase M14 domain. Zn(2+) contacts are provided by His-230, Glu-233, and His-328. Glu-401 serves as the catalytic Proton donor/acceptor.

The protein belongs to the peptidase M14 family. In terms of assembly, interacts with MYLK. Requires Zn(2+) as cofactor. As to expression, widely expressed. Expressed abundantly in testis, pituitary and brain and to a lower extent in eye, stomach, adrenal and kidney. In brain, expressed at low level in cerebellum as compared to cortex.

The protein localises to the cytoplasm. The protein resides in the cytosol. It is found in the cytoskeleton. It localises to the microtubule organizing center. Its subcellular location is the centrosome. The protein localises to the centriole. The protein resides in the golgi apparatus. It is found in the cilium basal body. It carries out the reaction (L-glutamyl)(n+1)-gamma-L-glutamyl-L-glutamyl-[protein] + H2O = (L-glutamyl)(n)-gamma-L-glutamyl-L-glutamyl-[protein] + L-glutamate. The catalysed reaction is C-terminal L-alpha-aminoacyl-L-glutamyl-L-glutamyl-[tubulin] + H2O = C-terminal L-alpha-aminoacyl-L-glutamyl-[tubulin] + L-glutamate. In terms of biological role, metallocarboxypeptidase that mediates protein deglutamylation of tubulin and non-tubulin target proteins. Catalyzes the removal of polyglutamate side chains present on the gamma-carboxyl group of glutamate residues within the C-terminal tail of tubulin protein. Specifically cleaves tubulin long-side-chains, while it is not able to remove the branching point glutamate. Also catalyzes the removal of polyglutamate residues from the carboxy-terminus of non-tubulin proteins such as MYLK. Mediates the deglutamylation of nucleotidyltransferase CGAS, leading to CGAS antiviral defense response activation. Involved in KLF4 deglutamylation which promotes KLF4 proteasome-mediated degradation, thereby negatively regulating cell pluripotency maintenance and embryogenesis. The protein is Cytosolic carboxypeptidase 6 of Mus musculus (Mouse).